The following is a 292-amino-acid chain: tRNA-splicing endonuclease (292 aa).

Active-site residues include Tyr231, His238, and Lys267.

This sequence belongs to the tRNA-intron endonuclease family. Archaeal long subfamily. As to quaternary structure, homodimer.

It carries out the reaction pretRNA = a 3'-half-tRNA molecule with a 5'-OH end + a 5'-half-tRNA molecule with a 2',3'-cyclic phosphate end + an intron with a 2',3'-cyclic phosphate and a 5'-hydroxyl terminus.. In terms of biological role, endonuclease that removes tRNA introns. Cleaves pre-tRNA at the 5'- and 3'-splice sites to release the intron. The products are an intron and two tRNA half-molecules bearing 2',3' cyclic phosphate and 5'-OH termini. Recognizes a pseudosymmetric substrate in which 2 bulged loops of 3 bases are separated by a stem of 4 bp. In Thermoplasma volcanium (strain ATCC 51530 / DSM 4299 / JCM 9571 / NBRC 15438 / GSS1), this protein is tRNA-splicing endonuclease.